Here is a 161-residue protein sequence, read N- to C-terminus: Small ribosomal subunit protein uS9 (161 aa).

The interval 1–38 is disordered; it reads MAQTITSLADLKQGPGAEPAGLSAEPQEPKLDKEGRAY. The span at 27–38 shows a compositional bias: basic and acidic residues; that stretch reads QEPKLDKEGRAY.

It belongs to the universal ribosomal protein uS9 family.

The chain is Small ribosomal subunit protein uS9 from Rhodospirillum centenum (strain ATCC 51521 / SW).